Here is a 200-residue protein sequence, read N- to C-terminus: Dephospho-CoA kinase (200 aa).

Residues 4–200 enclose the DPCK domain; the sequence is VIGLTGGIAS…AILKKWNIID (197 aa). Position 12-17 (12-17) interacts with ATP; sequence ASGKST.

This sequence belongs to the CoaE family.

It localises to the cytoplasm. The catalysed reaction is 3'-dephospho-CoA + ATP = ADP + CoA + H(+). The protein operates within cofactor biosynthesis; coenzyme A biosynthesis; CoA from (R)-pantothenate: step 5/5. Functionally, catalyzes the phosphorylation of the 3'-hydroxyl group of dephosphocoenzyme A to form coenzyme A. This is Dephospho-CoA kinase from Bacillus cereus (strain ZK / E33L).